Consider the following 374-residue polypeptide: tRNA N6-adenosine threonylcarbamoyltransferase (374 aa).

The Fe cation site is built by H117 and H121. Substrate is bound by residues 140-144, D174, G187, D191, and N283; that span reads LVSGG. D311 contacts Fe cation. The span at 337–352 shows a compositional bias: low complexity; sequence ADSSLPVTEPHVPGQG. Residues 337–374 form a disordered region; the sequence is ADSSLPVTEPHVPGQGHPHGHPHGHDHVHEVSKENLYS. Over residues 359-374 the composition is skewed to basic and acidic residues; the sequence is HGHDHVHEVSKENLYS.

Belongs to the KAE1 / TsaD family. Requires Fe(2+) as cofactor.

It localises to the cytoplasm. It catalyses the reaction L-threonylcarbamoyladenylate + adenosine(37) in tRNA = N(6)-L-threonylcarbamoyladenosine(37) in tRNA + AMP + H(+). In terms of biological role, required for the formation of a threonylcarbamoyl group on adenosine at position 37 (t(6)A37) in tRNAs that read codons beginning with adenine. Is involved in the transfer of the threonylcarbamoyl moiety of threonylcarbamoyl-AMP (TC-AMP) to the N6 group of A37, together with TsaE and TsaB. TsaD likely plays a direct catalytic role in this reaction. The protein is tRNA N6-adenosine threonylcarbamoyltransferase of Streptomyces coelicolor (strain ATCC BAA-471 / A3(2) / M145).